The sequence spans 94 residues: ESAT-6-like protein EsxI (94 aa).

This sequence belongs to the WXG100 family. ESAT-6 subfamily.

It localises to the secreted. The chain is ESAT-6-like protein EsxI from Mycobacterium bovis (strain ATCC BAA-935 / AF2122/97).